The primary structure comprises 1368 residues: DNA-directed RNA polymerase subunit beta (1368 aa).

The protein belongs to the RNA polymerase beta chain family. The RNAP catalytic core consists of 2 alpha, 1 beta, 1 beta' and 1 omega subunit. When a sigma factor is associated with the core the holoenzyme is formed, which can initiate transcription.

The catalysed reaction is RNA(n) + a ribonucleoside 5'-triphosphate = RNA(n+1) + diphosphate. Functionally, DNA-dependent RNA polymerase catalyzes the transcription of DNA into RNA using the four ribonucleoside triphosphates as substrates. This is DNA-directed RNA polymerase subunit beta from Cupriavidus pinatubonensis (strain JMP 134 / LMG 1197) (Cupriavidus necator (strain JMP 134)).